The following is a 393-amino-acid chain: METTMGFMDDNATNTSTSFLSVLNPHGAHATSFPFNFSYSDYDMPLDEDEDVTNSRTFFAAKIVIGMALVGIMLVCGIGNFIFIAALVRYKKLRNLTNLLIANLAISDFLVAIVCCPFEMDYYVVRQLSWEHGHVLCTSVNYLRTVSLYVSTNALLAIAIDRYLAIVHPLRPRMKCQTATGLIALVWTVSILIAIPSAYFTTETVLVIVKSQEKIFCGQIWPVDQQLYYKSYFLFIFGIEFVGPVVTMTLCYARISRELWFKAVPGFQTEQIRKRLRCRRKTVLVLMCILTAYVLCWAPFYGFTIVRDFFPTVFVKEKHYLTAFYIVECIAMSNSMINTLCFVTVKNDTVKYFKKIMLLHWKASYNGGKSSADLDLKTIGMPATEEVDCIRLK.

Over 1–62 the chain is Extracellular; the sequence is METTMGFMDD…TNSRTFFAAK (62 aa). Residues Asn11, Asn14, and Asn36 are each glycosylated (N-linked (GlcNAc...) asparagine). Residues 63 to 83 form a helical membrane-spanning segment; that stretch reads IVIGMALVGIMLVCGIGNFIF. The Cytoplasmic segment spans residues 84–98; the sequence is IAALVRYKKLRNLTN. A helical membrane pass occupies residues 99-119; sequence LLIANLAISDFLVAIVCCPFE. The Extracellular segment spans residues 120–146; that stretch reads MDYYVVRQLSWEHGHVLCTSVNYLRTV. The cysteines at positions 137 and 217 are disulfide-linked. The chain crosses the membrane as a helical span at residues 147 to 167; it reads SLYVSTNALLAIAIDRYLAIV. Topologically, residues 168 to 180 are cytoplasmic; the sequence is HPLRPRMKCQTAT. Residues 181-201 traverse the membrane as a helical segment; sequence GLIALVWTVSILIAIPSAYFT. The Extracellular segment spans residues 202–232; it reads TETVLVIVKSQEKIFCGQIWPVDQQLYYKSY. Residues 233–253 traverse the membrane as a helical segment; that stretch reads FLFIFGIEFVGPVVTMTLCYA. Residues 254–282 are Cytoplasmic-facing; that stretch reads RISRELWFKAVPGFQTEQIRKRLRCRRKT. A helical membrane pass occupies residues 283–303; it reads VLVLMCILTAYVLCWAPFYGF. The Extracellular portion of the chain corresponds to 304–322; sequence TIVRDFFPTVFVKEKHYLT. A helical membrane pass occupies residues 323 to 343; the sequence is AFYIVECIAMSNSMINTLCFV. Residues 344–393 lie on the Cytoplasmic side of the membrane; that stretch reads TVKNDTVKYFKKIMLLHWKASYNGGKSSADLDLKTIGMPATEEVDCIRLK.

It belongs to the G-protein coupled receptor 1 family. As to expression, localizes to glandular epithelium, stroma and vascular endothelial cells of first trimester decidua (at protein level). Up-regulated in first trimester decidua when compared with non-pregnant endometrium. Expressed in the stomach, throughout the small intestine, colon, rectum, thyroid gland, pituitary gland, salivary gland, adrenal gland, testis, ovary, brain, spleen, prostate and pancreas.

Its subcellular location is the cell membrane. Functionally, receptor for prokineticin 1. Exclusively coupled to the G(q) subclass of heteromeric G proteins. Activation leads to mobilization of calcium, stimulation of phosphoinositide turnover and activation of p44/p42 mitogen-activated protein kinase. May play a role during early pregnancy. In Homo sapiens (Human), this protein is Prokineticin receptor 1 (PROKR1).